Reading from the N-terminus, the 382-residue chain is Flap endonuclease 1 (382 aa).

The tract at residues 1-104 is N-domain; that stretch reads MGIKGLSQVI…GELEKRTERR (104 aa). Aspartate 34 is a Mg(2+) binding site. DNA contacts are provided by arginine 47 and arginine 70. Mg(2+)-binding residues include aspartate 86, glutamate 158, glutamate 160, aspartate 179, and aspartate 181. An I-domain region spans residues 122 to 253; the sequence is EAEKFERRLV…KKAVELIKQH (132 aa). Glutamate 158 serves as a coordination point for DNA. DNA-binding residues include glycine 231 and aspartate 233. Residue aspartate 233 coordinates Mg(2+). The interval 336-344 is interaction with PCNA; the sequence is TQGRIDSFF. The segment covering 359-368 has biased composition (basic and acidic residues); it reads KAQEEAEKMK. The disordered stretch occupies residues 359–382; the sequence is KAQEEAEKMKKGGKKSGPPKKKAK. Residues 369-382 are compositionally biased toward basic residues; sequence KGGKKSGPPKKKAK.

The protein belongs to the XPG/RAD2 endonuclease family. FEN1 subfamily. Interacts with PCNA. Three molecules of crn-1 bind to one PCNA trimer with each molecule binding to one PCNA monomer. PCNA stimulates the nuclease activity without altering cleavage specificity. Mg(2+) is required as a cofactor. In terms of processing, phosphorylated. Phosphorylation upon DNA damage induces relocalization to the nuclear plasma.

The protein resides in the nucleus. The protein localises to the nucleolus. Its subcellular location is the nucleoplasm. It is found in the mitochondrion. Functionally, structure-specific nuclease with 5'-flap endonuclease and 5'-3' exonuclease activities involved in DNA replication and repair. During DNA replication, cleaves the 5'-overhanging flap structure that is generated by displacement synthesis when DNA polymerase encounters the 5'-end of a downstream Okazaki fragment. It enters the flap from the 5'-end and then tracks to cleave the flap base, leaving a nick for ligation. Also involved in the long patch base excision repair (LP-BER) pathway, by cleaving within the apurinic/apyrimidinic (AP) site-terminated flap. Acts as a genome stabilization factor that prevents flaps from equilibrating into structures that lead to duplications and deletions. Also possesses 5'-3' exonuclease activity on nicked or gapped double-stranded DNA, and exhibits RNase H activity. Also involved in replication and repair of rDNA and in repairing mitochondrial DNA. The protein is Flap endonuclease 1 of Caenorhabditis briggsae.